The chain runs to 260 residues: Flap endonuclease Xni (260 aa).

Asp104 contacts Mg(2+). In terms of domain architecture, 5'-3' exonuclease spans 160 to 249 (VSPQQLTDYW…LNGNLQQLRL (90 aa)). Leu171, Ala172, Pro180, Val182, and Ile185 together coordinate K(+). The interval 184-189 (GIGPKS) is interaction with DNA.

Belongs to the Xni family. The cofactor is Mg(2+). K(+) is required as a cofactor.

Its function is as follows. Has flap endonuclease activity. During DNA replication, flap endonucleases cleave the 5'-overhanging flap structure that is generated by displacement synthesis when DNA polymerase encounters the 5'-end of a downstream Okazaki fragment. The sequence is that of Flap endonuclease Xni from Pectobacterium carotovorum subsp. carotovorum (strain PC1).